We begin with the raw amino-acid sequence, 84 residues long: Omega-conotoxin-like ArMKLT1-02 (84 aa).

The N-terminal stretch at 1-22 is a signal peptide; it reads MKVTCMMIVAVLFLTAWTFVTA. Positions 23–51 are excised as a propeptide; sequence DDSISALEDLFAKAHDKMENSEASPLNER. Intrachain disulfides connect C53/C71, C60/C75, and C70/C79.

Belongs to the conotoxin O1 superfamily. As to expression, expressed by the venom duct.

The protein resides in the secreted. Functionally, omega-conotoxins act at presynaptic membranes, they bind and block voltage-gated calcium channels (Cav). The sequence is that of Omega-conotoxin-like ArMKLT1-02 from Conus arenatus (Sand-dusted cone).